The sequence spans 197 residues: RILP-like protein 2 (197 aa).

Residues 1–24 (MEDHPVREEEDGEEDEGALAKSPL) are disordered. A compositionally biased stretch (acidic residues) spans 8–17 (EEEDGEEDEG). The RH1 domain occupies 14–96 (EDEGALAKSP…KQEVEGLRKA (83 aa)). Residues 69-153 (VNEGSLAVEE…VQEELQCYRS (85 aa)) are a coiled coil. One can recognise an RH2 domain in the interval 119-184 (RPRFTLQELR…GNGEKEERTI (66 aa)).

Belongs to the RILPL family. Homodimer. Interacts with RAC1. Interacts (via N-terminus) with MYO5A, the interaction is required for its role in dendrite formation. Interacts with RAB8A; interaction is dependent on the phosphorylation of RAB8A on 'Thr-72'. Interacts with RAB10 and RAB12; interaction is dependent on the phosphorylation of 'Thr-73' on RAB10 and 'Ser-105' on RAB12.

Its subcellular location is the cytoplasm. The protein resides in the cytosol. It is found in the cytoskeleton. It localises to the microtubule organizing center. The protein localises to the centrosome. Its subcellular location is the cell projection. The protein resides in the cilium. In terms of biological role, involved in cell shape and neuronal morphogenesis, positively regulating the establishment and maintenance of dendritic spines. Plays a role in cellular protein transport, including protein transport away from primary cilia. May function via activation of RAC1 and PAK1. This is RILP-like protein 2 (Rilpl2) from Mus musculus (Mouse).